The primary structure comprises 450 residues: Oxygen-independent coproporphyrinogen III oxidase (450 aa).

The region spanning Ile45–Gln282 is the Radical SAM core domain. Tyr54 contacts S-adenosyl-L-methionine. Cys60 and Cys64 together coordinate [4Fe-4S] cluster. Phe66 contributes to the S-adenosyl-L-methionine binding site. Cys67 is a [4Fe-4S] cluster binding site. Residues Gly111, Gly112–Thr113, Glu144, Gln171, Arg183, Asp208, Ala242, and Ile328 contribute to the S-adenosyl-L-methionine site.

Belongs to the anaerobic coproporphyrinogen-III oxidase family. Monomer. [4Fe-4S] cluster serves as cofactor.

The protein resides in the cytoplasm. The catalysed reaction is coproporphyrinogen III + 2 S-adenosyl-L-methionine = protoporphyrinogen IX + 2 5'-deoxyadenosine + 2 L-methionine + 2 CO2. The protein operates within porphyrin-containing compound metabolism; protoporphyrin-IX biosynthesis; protoporphyrinogen-IX from coproporphyrinogen-III (AdoMet route): step 1/1. Functionally, involved in the heme and chlorophyll biosynthesis. Catalyzes the anaerobic oxidative decarboxylation of propionate groups of rings A and B of coproporphyrinogen III to yield the vinyl groups in protoporphyrinogen IX. The sequence is that of Oxygen-independent coproporphyrinogen III oxidase (hemZ) from Cereibacter sphaeroides (strain ATCC 17023 / DSM 158 / JCM 6121 / CCUG 31486 / LMG 2827 / NBRC 12203 / NCIMB 8253 / ATH 2.4.1.) (Rhodobacter sphaeroides).